Consider the following 1358-residue polypeptide: Insulin-like growth factor 1 receptor (1358 aa).

The first 25 residues, 1–25 (MKAELVPVCTAWILGLLLCLGPAAA), serve as a signal peptide directing secretion. C28 and C47 form a disulfide bridge. N-linked (GlcNAc...) asparagine glycosylation is found at N74, N99, and N132. 13 disulfide bridges follow: C147-C175, C179-C202, C189-C208, C212-C221, C216-C227, C228-C236, C232-C245, C248-C257, C261-C273, C279-C299, C303-C317, C320-C324, and C328-C347. A glycan (N-linked (GlcNAc...) asparagine) is linked at N241. The N-linked (GlcNAc...) asparagine glycan is linked to N310. N-linked (GlcNAc...) asparagine glycans are attached at residues N411 and N432. Residues C449 and C482 are joined by a disulfide bond. 4 consecutive Fibronectin type-III domains span residues 483 to 603 (ESHV…TDAA), 604 to 702 (VPSI…TEAE), 727 to 818 (PRPN…FVFA), and 829 to 924 (IPGI…LKPD). 5 N-linked (GlcNAc...) asparagine glycosylation sites follow: N488, N528, N616, N634, and N669. The segment at 670-691 (GTIDTEGGTEPTKPEGSVGEKG) is disordered. At 735–934 (DVLAVGNSTV…VRNNILQMVV (200 aa)) the chain is on the extracellular side. 5 N-linked (GlcNAc...) asparagine glycosylation sites follow: N741, N750, N758, N895, and N908. A helical transmembrane segment spans residues 935–955 (AIPLALSFLLVGIISIVCFVF). Residues 956–1358 (KKRNSNRLGN…ALPLPQSSAC (403 aa)) are Cytoplasmic-facing. A Phosphotyrosine; by autocatalysis modification is found at Y976. The 276-residue stretch at 995–1270 (ITMNRELGQG…SIKDELDPGF (276 aa)) folds into the Protein kinase domain. ATP is bound by residues 1001 to 1009 (LGQGSFGMV) and K1029. Residue D1131 is the Proton acceptor of the active site. Phosphotyrosine; by autocatalysis is present on residues Y1157, Y1161, and Y1162. The interval 1336–1358 (PYAHMNGGRKNERALPLPQSSAC) is disordered.

It belongs to the protein kinase superfamily. Tyr protein kinase family. Insulin receptor subfamily. In terms of assembly, tetramer of 2 alpha and 2 beta chains linked by disulfide bonds. The alpha chains contribute to the formation of the ligand-binding domain, while the beta chain carries the kinase domain. Mn(2+) is required as a cofactor. In terms of processing, the cytoplasmic domain of the beta subunit is autophosphorylated on Tyr residues in response to low concentrations of insulin-like growth factor (IGF1) and higher concentrations of insulin.

It localises to the cell membrane. It carries out the reaction L-tyrosyl-[protein] + ATP = O-phospho-L-tyrosyl-[protein] + ADP + H(+). Autophosphorylation activates the kinase activity. Functionally, this receptor binds insulin-like growth factor 1 (IGF1) with a high affinity and IGF2 with a lower affinity. It has a tyrosine-protein kinase activity, which is necessary for the activation of the IGF1-stimulated downstream signaling cascade. Plays a role in oocyte maturation. Promotes head development by inhibiting Wnt signaling during embryogenesis. This chain is Insulin-like growth factor 1 receptor (igf1r), found in Xenopus laevis (African clawed frog).